Here is a 124-residue protein sequence, read N- to C-terminus: Large ribosomal subunit protein uL18 (124 aa).

Belongs to the universal ribosomal protein uL18 family. As to quaternary structure, part of the 50S ribosomal subunit; part of the 5S rRNA/L5/L18/L25 subcomplex. Contacts the 5S and 23S rRNAs.

Its function is as follows. This is one of the proteins that bind and probably mediate the attachment of the 5S RNA into the large ribosomal subunit, where it forms part of the central protuberance. This Koribacter versatilis (strain Ellin345) protein is Large ribosomal subunit protein uL18.